We begin with the raw amino-acid sequence, 159 residues long: Eukaryotic translation initiation factor 5A-1 (159 aa).

A compositionally biased stretch (basic and acidic residues) spans Met1–Ala12. Residues Met1 to Gln23 are disordered. Hypusine is present on Lys52.

This sequence belongs to the eIF-5A family. Lys-52 undergoes hypusination, a unique post-translational modification that consists in the addition of a butylamino group from spermidine to lysine side chain, leading to the formation of the unusual amino acid hypusine. eIF-5As are the only known proteins to undergo this modification, which is essential for their function.

In terms of biological role, translation factor that promotes translation elongation and termination, particularly upon ribosome stalling at specific amino acid sequence contexts. Binds between the exit (E) and peptidyl (P) site of the ribosome and promotes rescue of stalled ribosome: specifically required for efficient translation of polyproline-containing peptides as well as other motifs that stall the ribosome. Acts as a ribosome quality control (RQC) cofactor by joining the RQC complex to facilitate peptidyl transfer during CAT tailing step. This chain is Eukaryotic translation initiation factor 5A-1, found in Solanum lycopersicum (Tomato).